The following is a 409-amino-acid chain: Arginine biosynthesis bifunctional protein ArgJ (409 aa).

Substrate contacts are provided by Thr-157, Lys-183, Thr-194, Glu-281, Asn-404, and Ser-409. Catalysis depends on Thr-194, which acts as the Nucleophile.

It belongs to the ArgJ family. Heterotetramer of two alpha and two beta chains.

It is found in the cytoplasm. It catalyses the reaction N(2)-acetyl-L-ornithine + L-glutamate = N-acetyl-L-glutamate + L-ornithine. It carries out the reaction L-glutamate + acetyl-CoA = N-acetyl-L-glutamate + CoA + H(+). Its pathway is amino-acid biosynthesis; L-arginine biosynthesis; L-ornithine and N-acetyl-L-glutamate from L-glutamate and N(2)-acetyl-L-ornithine (cyclic): step 1/1. It participates in amino-acid biosynthesis; L-arginine biosynthesis; N(2)-acetyl-L-ornithine from L-glutamate: step 1/4. Catalyzes two activities which are involved in the cyclic version of arginine biosynthesis: the synthesis of N-acetylglutamate from glutamate and acetyl-CoA as the acetyl donor, and of ornithine by transacetylation between N(2)-acetylornithine and glutamate. The protein is Arginine biosynthesis bifunctional protein ArgJ of Zymomonas mobilis subsp. mobilis (strain ATCC 31821 / ZM4 / CP4).